A 284-amino-acid chain; its full sequence is MSAEKAKAYWQLMRMDRPIGSLLLLWPTVWALVIAAQGMPSWNVLIVFVLGVFLMRSAGCVINDFADRKVDGHVKRTKQRPLPSGKVTSKEAIGLFLVLGISSFLLVLTMNPLTIKLSFAGIFLAFIYPFMKRYTYLPQLFLGLAFSWAIPMAWAAQTGELPWIVWFVFVINALWTIAYDTQYAMVDRDDDLKIGIKSTAILFGRHDKLVIGVLQLVTLAMLVLLGQHYELGQSYYWTILVAASLFVYQQHLIRHRERDLCFKAFLNNNYVGIVIVIGLLIAFW.

The next 7 membrane-spanning stretches (helical) occupy residues 33-53 (VIAA…LGVF), 93-113 (IGLF…MNPL), 136-156 (YLPQ…AWAA), 159-179 (GELP…TIAY), 209-229 (LVIG…GQHY), 231-248 (LGQS…LFVY), and 264-284 (AFLN…IAFW).

Belongs to the UbiA prenyltransferase family. Requires Mg(2+) as cofactor.

It is found in the cell inner membrane. It catalyses the reaction all-trans-octaprenyl diphosphate + 4-hydroxybenzoate = 4-hydroxy-3-(all-trans-octaprenyl)benzoate + diphosphate. The protein operates within cofactor biosynthesis; ubiquinone biosynthesis. Catalyzes the prenylation of para-hydroxybenzoate (PHB) with an all-trans polyprenyl group. Mediates the second step in the final reaction sequence of ubiquinone-8 (UQ-8) biosynthesis, which is the condensation of the polyisoprenoid side chain with PHB, generating the first membrane-bound Q intermediate 3-octaprenyl-4-hydroxybenzoate. In Vibrio campbellii (strain ATCC BAA-1116), this protein is 4-hydroxybenzoate octaprenyltransferase.